A 642-amino-acid polypeptide reads, in one-letter code: Serotransferrin (642 aa).

Transferrin-like domains lie at 1 to 280 (GIKE…SLKK) and 290 to 621 (IKWC…SLRQ). 2 residues coordinate Fe(3+): D25 and Y54. 3 disulfides stabilise this stretch: C77–C158, C121–C137, and C186–C200. Positions 79, 83, 85, and 86 each coordinate hydrogencarbonate. Residue Y152 participates in Fe(3+) binding. H208 provides a ligand contact to Fe(3+). 2 disulfide bridges follow: C293/C329 and C303/C320. Fe(3+) is bound at residue D344. 7 disulfide bridges follow: C354-C633, C369-C594, C402-C480, C426-C622, C436-C450, C447-C463, and C520-C535. N365 carries N-linked (GlcNAc...) asparagine glycosylation. Y379 provides a ligand contact to Fe(3+). Positions 404, 408, 410, and 411 each coordinate hydrogencarbonate. Residue Y474 coordinates Fe(3+). H543 serves as a coordination point for Fe(3+).

This sequence belongs to the transferrin family. As to quaternary structure, monomer. Brain and liver; to a lesser extent in kidney and heart.

Its subcellular location is the secreted. Transferrins are iron binding transport proteins which can bind two Fe(3+) ions in association with the binding of an anion, usually bicarbonate. The polypeptide is Serotransferrin (tf) (Gadus morhua (Atlantic cod)).